Here is a 245-residue protein sequence, read N- to C-terminus: Methyltransferase-like protein 27 (245 aa).

In Homo sapiens (Human), this protein is Methyltransferase-like protein 27.